The chain runs to 501 residues: Zinc finger and SCAN domain-containing protein 12 (501 aa).

Residues lysine 20 and lysine 26 each participate in a glycyl lysine isopeptide (Lys-Gly) (interchain with G-Cter in SUMO2) cross-link. The SCAN box domain maps to 51–132 (QFCYQETSGP…DLERELDELG (82 aa)). Residues 175-194 (REAQEEQVSGVETGNEPRNV) are disordered. The span at 180–194 (EQVSGVETGNEPRNV) shows a compositional bias: polar residues. Lysine 197 is covalently cross-linked (Glycyl lysine isopeptide (Lys-Gly) (interchain with G-Cter in SUMO2)). A disordered region spans residues 223–255 (EAHNPGEESSGISHEDSQPLRNENGVNSPANSE). Polar residues predominate over residues 241–253 (PLRNENGVNSPAN). 6 C2H2-type zinc fingers span residues 269-291 (HGCDECGKSFTQHSRLIEHKRVH), 297-319 (YKCEVCGKTFRWRTVLIRHKVVH), 325-347 (YKCNECGRAFGQWSALNQHQRLH), 353-375 (YHCNECGKAFCQKAGLFHHLKSH), 381-403 (YQCLQCNKSFNRRSTLSQHQGVH), and 409-431 (YECNDCGKAFVYNSSLATHQETH). A disordered region spans residues 429 to 450 (ETHHKEKPFTQSGPIQQQRNHT). Polar residues predominate over residues 437–447 (FTQSGPIQQQR). Residues 455 to 477 (YKCSVCGKAFIQKISLIEHEQIH) form a C2H2-type 7 zinc finger. A C2H2-type 8; degenerate zinc finger spans residues 483–501 (YKCAEGGKAFIQMSELTEH).

This sequence belongs to the krueppel C2H2-type zinc-finger protein family. Testis specific.

It localises to the nucleus. In terms of biological role, may be involved in transcriptional regulation. The sequence is that of Zinc finger and SCAN domain-containing protein 12 (Zscan12) from Mus musculus (Mouse).